The following is a 61-amino-acid chain: MDTKLLDILACPICKGPLKLSADKTELISKGAGLAYPIRDGIPVMLESEARTLTTEERLDK.

The protein belongs to the UPF0434 family.

This Pseudomonas fluorescens (strain ATCC BAA-477 / NRRL B-23932 / Pf-5) protein is UPF0434 protein PFL_1779.